Consider the following 295-residue polypeptide: uncharacterized protein (295 aa).

It localises to the plastid. The protein localises to the chloroplast. This is an uncharacterized protein from Euglena gracilis.